The primary structure comprises 369 residues: Ribonuclease D (369 aa).

Positions 1-166 (MITTNDALAA…PIAHKLMEQV (166 aa)) constitute a 3'-5' exonuclease domain. One can recognise an HRDC domain in the interval 206-285 (RPRQLACLKL…AQAQALLEDA (80 aa)).

It belongs to the RNase D family. The cofactor is a divalent metal cation.

Its subcellular location is the cytoplasm. It carries out the reaction Exonucleolytic cleavage that removes extra residues from the 3'-terminus of tRNA to produce 5'-mononucleotides.. Exonuclease involved in the 3' processing of various precursor tRNAs. Initiates hydrolysis at the 3'-terminus of an RNA molecule and releases 5'-mononucleotides. The polypeptide is Ribonuclease D (Cronobacter turicensis (strain DSM 18703 / CCUG 55852 / LMG 23827 / z3032)).